Here is a 1401-residue protein sequence, read N- to C-terminus: DNA-directed RNA polymerase subunit beta' (1401 aa).

Residues C71, C73, C86, and C89 each coordinate Zn(2+). D462, D464, and D466 together coordinate Mg(2+). Positions 810, 884, 891, and 894 each coordinate Zn(2+). The interval E1378–S1401 is disordered.

The protein belongs to the RNA polymerase beta' chain family. As to quaternary structure, the RNAP catalytic core consists of 2 alpha, 1 beta, 1 beta' and 1 omega subunit. When a sigma factor is associated with the core the holoenzyme is formed, which can initiate transcription. Mg(2+) serves as cofactor. It depends on Zn(2+) as a cofactor.

The enzyme catalyses RNA(n) + a ribonucleoside 5'-triphosphate = RNA(n+1) + diphosphate. In terms of biological role, DNA-dependent RNA polymerase catalyzes the transcription of DNA into RNA using the four ribonucleoside triphosphates as substrates. This is DNA-directed RNA polymerase subunit beta' from Rhodopseudomonas palustris (strain BisB18).